We begin with the raw amino-acid sequence, 355 residues long: Peptide chain release factor 1 (355 aa).

At Gln233 the chain carries N5-methylglutamine.

This sequence belongs to the prokaryotic/mitochondrial release factor family. In terms of processing, methylated by PrmC. Methylation increases the termination efficiency of RF1.

The protein localises to the cytoplasm. Functionally, peptide chain release factor 1 directs the termination of translation in response to the peptide chain termination codons UAG and UAA. The polypeptide is Peptide chain release factor 1 (Caldicellulosiruptor saccharolyticus (strain ATCC 43494 / DSM 8903 / Tp8T 6331)).